The chain runs to 283 residues: Formamidopyrimidine-DNA glycosylase (283 aa).

Pro2 serves as the catalytic Schiff-base intermediate with DNA. The active-site Proton donor is the Glu3. Lys60 (proton donor; for beta-elimination activity) is an active-site residue. The DNA site is built by His100, Arg119, and Arg164. The FPG-type zinc finger occupies Trp249–Lys283. Arg273 acts as the Proton donor; for delta-elimination activity in catalysis.

This sequence belongs to the FPG family. Monomer. Zn(2+) is required as a cofactor.

It catalyses the reaction Hydrolysis of DNA containing ring-opened 7-methylguanine residues, releasing 2,6-diamino-4-hydroxy-5-(N-methyl)formamidopyrimidine.. The enzyme catalyses 2'-deoxyribonucleotide-(2'-deoxyribose 5'-phosphate)-2'-deoxyribonucleotide-DNA = a 3'-end 2'-deoxyribonucleotide-(2,3-dehydro-2,3-deoxyribose 5'-phosphate)-DNA + a 5'-end 5'-phospho-2'-deoxyribonucleoside-DNA + H(+). Functionally, involved in base excision repair of DNA damaged by oxidation or by mutagenic agents. Acts as a DNA glycosylase that recognizes and removes damaged bases. Has a preference for oxidized purines, such as 7,8-dihydro-8-oxoguanine (8-oxoG). Has AP (apurinic/apyrimidinic) lyase activity and introduces nicks in the DNA strand. Cleaves the DNA backbone by beta-delta elimination to generate a single-strand break at the site of the removed base with both 3'- and 5'-phosphates. The chain is Formamidopyrimidine-DNA glycosylase from Prochlorococcus marinus (strain SARG / CCMP1375 / SS120).